The primary structure comprises 447 residues: Chromosomal replication initiator protein DnaA (447 aa).

The segment at 1 to 74 is domain I, interacts with DnaA modulators; sequence MENIEELWSA…MLLEVTGSEL (74 aa). The tract at residues 74 to 108 is domain II; the sequence is LNTKFIIPDSLEEIEEQKPMPKPKQSTDTGDSPKS. Residues 85–107 form a disordered region; that stretch reads EEIEEQKPMPKPKQSTDTGDSPK. The segment covering 97–107 has biased composition (polar residues); that stretch reads KQSTDTGDSPK. The segment at 109–325 is domain III, AAA+ region; it reads MLNSKYTFDT…GALIRVVAYS (217 aa). Positions 153, 155, 156, and 157 each coordinate ATP. Positions 326 to 447 are domain IV, binds dsDNA; that stretch reads SLVNQDIDAS…EELKEKLKSI (122 aa).

It belongs to the DnaA family. In terms of assembly, oligomerizes as a right-handed, spiral filament on DNA at oriC.

Its subcellular location is the cytoplasm. Functionally, plays an essential role in the initiation and regulation of chromosomal replication. ATP-DnaA binds to the origin of replication (oriC) to initiate formation of the DNA replication initiation complex once per cell cycle. Binds the DnaA box (a 9 base pair repeat at the origin) and separates the double-stranded (ds)DNA. Forms a right-handed helical filament on oriC DNA; dsDNA binds to the exterior of the filament while single-stranded (ss)DNA is stabiized in the filament's interior. The ATP-DnaA-oriC complex binds and stabilizes one strand of the AT-rich DNA unwinding element (DUE), permitting loading of DNA polymerase. After initiation quickly degrades to an ADP-DnaA complex that is not apt for DNA replication. Binds acidic phospholipids. This Oceanobacillus iheyensis (strain DSM 14371 / CIP 107618 / JCM 11309 / KCTC 3954 / HTE831) protein is Chromosomal replication initiator protein DnaA.